Consider the following 148-residue polypeptide: Flavodoxin (148 aa).

The region spanning 4–145 (VLIVYGSTTG…DVSAWAGRVV (142 aa)) is the Flavodoxin-like domain.

This sequence belongs to the flavodoxin family. The cofactor is FMN.

Low-potential electron donor to a number of redox enzymes. The chain is Flavodoxin from Nitratidesulfovibrio vulgaris (strain DSM 19637 / Miyazaki F) (Desulfovibrio vulgaris).